The primary structure comprises 415 residues: Mechanosensing system component YbdG (415 aa).

At 1–24 (MQDLISQVEDLAGIEIDHTTSMVM) the chain is on the periplasmic side. The chain crosses the membrane as a helical span at residues 25–45 (IFGIIFLTAVVVHIILHWVVL). At 46–67 (RTFEKRAIASSRLWLQIITQNK) the chain is on the cytoplasmic side. A helical membrane pass occupies residues 68-88 (LFHRLAFTLQGIIVNIQAVFW). At 89-104 (LQKGTEAADILTTCAQ) the chain is on the periplasmic side. Residues 105–125 (LWIMMYALLSVFSLLDVILNL) form a helical membrane-spanning segment. At 126-148 (AQKFPAASQLPLKGIFQGIKLIG) the chain is on the cytoplasmic side. A helical membrane pass occupies residues 149–169 (AILVGILMISLLIGQSPAILI). At 170–173 (SGLG) the chain is on the periplasmic side. A helical transmembrane segment spans residues 174–194 (AMAAVLMLVFKDPILGLVAGI). The Cytoplasmic segment spans residues 195–415 (QLSANDMLKL…IRSLAGAFKQ (221 aa)).

Belongs to the MscS (TC 1.A.23) family. In terms of assembly, homoheptamer.

It is found in the cell inner membrane. Its function is as follows. Functions as a component of a mechanosensing system that transmits signals triggered by external osmotic changes to intracellular factors. The polypeptide is Mechanosensing system component YbdG (ybdG) (Shigella flexneri).